The sequence spans 335 residues: Transmembrane protein 120B-A (335 aa).

Residues 1 to 40 (MSLQKCQEEWSEIEKEFQQLQETHKVYKQKLEELNSLQNL) are a coiled coil. The next 6 helical transmembrane spans lie at 100-122 (GLYL…AKFA), 130-150 (FKLY…FVLN), 157-177 (VFNF…SILI), 193-213 (VSTF…YQIF), 268-288 (FLLP…ITLF), and 300-320 (QVFV…LTTL).

It belongs to the TMEM120 family.

The protein localises to the nucleus inner membrane. Functionally, necessary for efficient adipogenesis. Does not show ion channel activity. The sequence is that of Transmembrane protein 120B-A (tmem120b-a) from Xenopus laevis (African clawed frog).